Reading from the N-terminus, the 226-residue chain is Membrane protein (226 aa).

The Virion surface portion of the chain corresponds to 1–11; the sequence is MSNGSIPVDEV. The chain crosses the membrane as a helical span at residues 12-32; that stretch reads IEHLRNWNFTWNIILTILLVV. Residues 33–41 lie on the Intravirion side of the membrane; that stretch reads LQYGHYKYS. A helical membrane pass occupies residues 42-62; it reads VFLYGVKMAILWILWPLVLAL. At 63–75 the chain is on the virion surface side; sequence SLFDAWASFQVNW. Residues 76–96 traverse the membrane as a helical segment; that stretch reads VFFAFSILMACITLMLWIMYF. The Intravirion portion of the chain corresponds to 97–226; the sequence is VNSIRLWRRT…TDSEKVPHLV (130 aa). The interval 200 to 216 is interaction with N protein; the sequence is RSKHGDYSAVSNPSAVL.

It belongs to the alphacoronaviruses M protein family. As to quaternary structure, homomultimer. Interacts with envelope E protein in the budding compartment of the host cell, which is located between endoplasmic reticulum and the Golgi complex. Forms a complex with HE and S proteins. Interacts with nucleocapsid N protein. This interaction probably participates in RNA packaging into the virus.

Its subcellular location is the virion membrane. The protein localises to the host Golgi apparatus membrane. In terms of biological role, component of the viral envelope that plays a central role in virus morphogenesis and assembly via its interactions with other viral proteins. The chain is Membrane protein from Sus scrofa (Pig).